The sequence spans 323 residues: Thiamine-monophosphate kinase (323 aa).

Mg(2+)-binding residues include Asp30, Ser45, Thr46, and Asp47. Position 54 (His54) interacts with substrate. Positions 75 and 122 each coordinate Mg(2+). ATP is bound by residues Gly121–Asp122 and Arg146. A Mg(2+)-binding site is contributed by Asp212. ATP is bound at residue Ser214. Asp215 contacts Mg(2+). Residues Glu263 and Phe319 each coordinate substrate.

It belongs to the thiamine-monophosphate kinase family.

The catalysed reaction is thiamine phosphate + ATP = thiamine diphosphate + ADP. It participates in cofactor biosynthesis; thiamine diphosphate biosynthesis; thiamine diphosphate from thiamine phosphate: step 1/1. Functionally, catalyzes the ATP-dependent phosphorylation of thiamine-monophosphate (TMP) to form thiamine-pyrophosphate (TPP), the active form of vitamin B1. The polypeptide is Thiamine-monophosphate kinase (Buchnera aphidicola subsp. Acyrthosiphon pisum (strain APS) (Acyrthosiphon pisum symbiotic bacterium)).